The chain runs to 251 residues: Triosephosphate isomerase (251 aa).

9–11 (NWK) serves as a coordination point for substrate. The active-site Electrophile is the histidine 95. Glutamate 167 serves as the catalytic Proton acceptor. Residues glycine 173, serine 213, and 234-235 (GG) contribute to the substrate site. The residue at position 213 (serine 213) is a Phosphoserine.

The protein belongs to the triosephosphate isomerase family. As to quaternary structure, homodimer.

Its subcellular location is the cytoplasm. It catalyses the reaction D-glyceraldehyde 3-phosphate = dihydroxyacetone phosphate. Its pathway is carbohydrate biosynthesis; gluconeogenesis. The protein operates within carbohydrate degradation; glycolysis; D-glyceraldehyde 3-phosphate from glycerone phosphate: step 1/1. In terms of biological role, involved in the gluconeogenesis. Catalyzes stereospecifically the conversion of dihydroxyacetone phosphate (DHAP) to D-glyceraldehyde-3-phosphate (G3P). The polypeptide is Triosephosphate isomerase (Halalkalibacterium halodurans (strain ATCC BAA-125 / DSM 18197 / FERM 7344 / JCM 9153 / C-125) (Bacillus halodurans)).